The chain runs to 338 residues: MSTLRLLISDSYDPWFNLAVEECIFRQMPATQRVLFLWRNADTVVIGRAQNPWKECNTRRMEEDNVRLARRSSGGGAVFHDLGNTCFTFMAGKPEYDKTISTSIVLNALNALGVSAEASGRNDLVVKTAEGDRKVSGSAYRETKDRGFHHGTLLLNSDLSRLANYLNPDKKKLAAKGITSVRSRVTNLTELLPGITHEQVCEAITEAFFAHYGERVEAEIISPDKTPDLPNFAETFARQSSWEWNFGQAPAFSHLLDERFTWGGVELHFDVEKGHITRAQVFTDSLNPAPLEALAGRLQGCLYRADMLQQECEALLVDFPEQEKELRELSAWIAGAVR.

A BPL/LPL catalytic domain is found at 29 to 216; the sequence is PATQRVLFLW…AFFAHYGERV (188 aa). ATP is bound by residues Arg-71, 76 to 79, and Lys-134; that span reads GAVF. (R)-lipoate is bound at residue Lys-134.

The protein belongs to the LplA family. Monomer.

Its subcellular location is the cytoplasm. It catalyses the reaction L-lysyl-[lipoyl-carrier protein] + (R)-lipoate + ATP = N(6)-[(R)-lipoyl]-L-lysyl-[lipoyl-carrier protein] + AMP + diphosphate + H(+). Its pathway is protein modification; protein lipoylation via exogenous pathway; protein N(6)-(lipoyl)lysine from lipoate: step 1/2. It functions in the pathway protein modification; protein lipoylation via exogenous pathway; protein N(6)-(lipoyl)lysine from lipoate: step 2/2. Its function is as follows. Catalyzes both the ATP-dependent activation of exogenously supplied lipoate to lipoyl-AMP and the transfer of the activated lipoyl onto the lipoyl domains of lipoate-dependent enzymes. In Escherichia coli O1:K1 / APEC, this protein is Lipoate-protein ligase A.